A 177-amino-acid polypeptide reads, in one-letter code: 3-hydroxydecanoyl-[acyl-carrier-protein] dehydratase (177 aa).

His76 is an active-site residue.

It belongs to the thioester dehydratase family. FabA subfamily. Homodimer.

It is found in the cytoplasm. It carries out the reaction a (3R)-hydroxyacyl-[ACP] = a (2E)-enoyl-[ACP] + H2O. The enzyme catalyses (3R)-hydroxydecanoyl-[ACP] = (2E)-decenoyl-[ACP] + H2O. The catalysed reaction is (2E)-decenoyl-[ACP] = (3Z)-decenoyl-[ACP]. Its pathway is lipid metabolism; fatty acid biosynthesis. Necessary for the introduction of cis unsaturation into fatty acids. Catalyzes the dehydration of (3R)-3-hydroxydecanoyl-ACP to E-(2)-decenoyl-ACP and then its isomerization to Z-(3)-decenoyl-ACP. Can catalyze the dehydratase reaction for beta-hydroxyacyl-ACPs with saturated chain lengths up to 16:0, being most active on intermediate chain length. The sequence is that of 3-hydroxydecanoyl-[acyl-carrier-protein] dehydratase from Haemophilus influenzae (strain PittGG).